The primary structure comprises 699 residues: Kinesin-II 85 kDa subunit (699 aa).

One can recognise a Kinesin motor domain in the interval 10–342; sequence NVRVVVRCRP…LRYANRAKNI (333 aa). Position 97–104 (97–104) interacts with ATP; the sequence is GQTGTGKT. Residues 341–619 are a coiled coil; sequence NIKNKAKINE…EDIGEWQLKC (279 aa). Disordered stretches follow at residues 369–415, 432–456, and 660–699; these read KQIS…LSPE, EEKK…ESEL, and GMKY…ALLQ. The segment covering 376 to 395 has biased composition (acidic residues); sequence EGLDDDEESGSEESGDEEAG. The segment covering 400–411 has biased composition (basic residues); that stretch reads KKKRKGKNPKRK. The globular stretch occupies residues 620-699; that stretch reads VAYTGNNMRK…MASSIDALLQ (80 aa). The span at 667 to 679 shows a compositional bias: polar residues; sequence QGKSGRPKTSSGR.

Belongs to the TRAFAC class myosin-kinesin ATPase superfamily. Kinesin family. Kinesin II subfamily. In terms of assembly, heterotrimer of a 115 kDa subunit (KAP115) and two kinesin-like subunits of 95 kDa (KRP95) and 85 kDa (KRP85). In terms of processing, the N-terminus is blocked.

It is found in the cytoplasm. The protein resides in the cytoskeleton. The chain is Kinesin-II 85 kDa subunit (KRP85) from Strongylocentrotus purpuratus (Purple sea urchin).